Reading from the N-terminus, the 967-residue chain is Muscular LMNA-interacting protein (967 aa).

S129 carries the post-translational modification Phosphoserine. Disordered regions lie at residues 132–154 (EDEATCRQGEQGPPGGPGNIATR), 302–336 (GLASEAQKKMSTSNVLNPKEDVRTCPAPASGASLT), 432–462 (QKVKQTPPTSKKSLSSGSLTTGSTEQEHQAS), 506–628 (GSTL…SASH), 644–685 (QTLQ…TPSL), 786–838 (SMHS…SQLT), and 929–967 (FSVRDEQEKSPTLLSQDTYNKLGHPMVTIPEHDTLDSKE). Positions 144 to 811 (PPGGPGNIAT…GSETIKTPTT (668 aa)) are required for interaction with ISL1. The span at 437-455 (TPPTSKKSLSSGSLTTGST) shows a compositional bias: low complexity. Over residues 508-523 (TLRSNTTSPQPQTDTF) the composition is skewed to polar residues. Residues 528–541 (VPSVTPVLSPLSSS) show a composition bias toward low complexity. Basic and acidic residues predominate over residues 543–556 (GRKDGDSRTPEKNR). Polar residues-rich tracts occupy residues 558 to 567 (ICIQPSTLAS) and 658 to 685 (GSATCPSRTQMPENTASNHSSRVSTPSL). S792 is subject to Phosphoserine. Polar residues predominate over residues 800 to 811 (MLGSETIKTPTT). Over residues 826–835 (SSSSSTASES) the composition is skewed to low complexity. A compositionally biased stretch (polar residues) spans 938-947 (SPTLLSQDTY). Positions 958–967 (PEHDTLDSKE) are enriched in basic and acidic residues.

Directly interacts with LMNA. Interacts with ISL1 (via N-terminal domain); the interaction represses ISL1 transactivator activity. Interactions of ISL1 with MLIP1 and GCN5/KAT2A may be mutually exclusive. Post-translationally, may be ubiquitinated by UBE3C ubiquitin ligase; ubiquitination is followed by protein degradation. As to expression, predominantly expressed in the heart and skeletal muscle, but detected at lower levels in the lung and brain (at protein level). Also detected in smooth muscle, thymus and kidney. In brain, expressed by a subpopulation of cells within the hippocampus and cortex. In heart, expressed by cardiomyocytes. Expression is reduced in hypertrophic hearts at the transcript level. However, expression in hypertrophic hearts induced by transverse aortic constriction do not differ from control at the protein level.

The protein resides in the nucleus. It localises to the nucleus envelope. Its subcellular location is the PML body. The protein localises to the cytoplasm. It is found in the cytosol. The protein resides in the cell membrane. It localises to the sarcolemma. Its function is as follows. Required for myoblast differentiation into myotubes, possibly acting as a transcriptional regulator of the myogenic program. Required for cardiac adaptation to stress through integrated regulation of the AKT/mTOR pathways and FOXO1. Regulates cardiac homeostasis and plays a role in the protection against cardiac hypertrophy. Binds chromatin. May act as a transcriptional cofactor for ISL1, repressing its transcriptional activity. May also repress MYOCD transcriptional activity. The chain is Muscular LMNA-interacting protein from Mus musculus (Mouse).